Reading from the N-terminus, the 310-residue chain is Cytochrome f (310 aa).

A signal peptide spans 1–27 (MRRHLSLFLGSLVIGLALLIAPAASWA). Tyrosine 28, cysteine 48, cysteine 51, and histidine 52 together coordinate heme. The chain crosses the membrane as a helical span at residues 277-297 (IYGLLAFFAAVALAQIMLVLK).

This sequence belongs to the cytochrome f family. In terms of assembly, the 4 large subunits of the cytochrome b6-f complex are cytochrome b6, subunit IV (17 kDa polypeptide, PetD), cytochrome f and the Rieske protein, while the 4 small subunits are PetG, PetL, PetM and PetN. The complex functions as a dimer. It depends on heme as a cofactor.

The protein localises to the cellular thylakoid membrane. Its function is as follows. Component of the cytochrome b6-f complex, which mediates electron transfer between photosystem II (PSII) and photosystem I (PSI), cyclic electron flow around PSI, and state transitions. This Synechococcus sp. (strain CC9605) protein is Cytochrome f.